Consider the following 285-residue polypeptide: MRPMTHVPVLYQEALDLLAVRPGGVYVDATLGGAGHARGILERGGRVIGLDQDPEAVARAKGLHLPGLTVVQGNFRHLKRHLAALGVERVDGILADLGVSSFHLDDPSRGFSYQKEGPLDMRMGLEGPTAKEVVNRLPLEALARLLRELGEEPQAYRIARAIVAAREKAPIETTTQLAEIVRKAVGFRRAGHPARKTFQALRIYVNDELNALKEFLEQAAEVLAPRGRLVVIAFHSLEDRVVKRFLRESGLKVLTKKPLVPSEKEAAQNPRARSAKLRAAEKEAP.

S-adenosyl-L-methionine-binding positions include 34–36 (AGH), Asp51, Phe75, Asp96, and His103. The tract at residues 258–285 (PLVPSEKEAAQNPRARSAKLRAAEKEAP) is disordered.

It belongs to the methyltransferase superfamily. RsmH family.

The protein resides in the cytoplasm. It catalyses the reaction cytidine(1402) in 16S rRNA + S-adenosyl-L-methionine = N(4)-methylcytidine(1402) in 16S rRNA + S-adenosyl-L-homocysteine + H(+). Its function is as follows. Specifically methylates the N4 position of cytidine in position 1402 (C1402) of 16S rRNA. The polypeptide is Ribosomal RNA small subunit methyltransferase H (Thermus thermophilus (strain ATCC BAA-163 / DSM 7039 / HB27)).